The sequence spans 347 residues: Olfactory receptor 2M2 (347 aa).

At 1–25 the chain is on the extracellular side; it reads MAWENQTFNSDFILLGIFNHSPPHT. N5 is a glycosylation site (N-linked (GlcNAc...) asparagine). A helical transmembrane segment spans residues 26-49; sequence FLFFLVLGIFLVAFMGNSVMVLLI. Residues 50–57 lie on the Cytoplasmic side of the membrane; the sequence is YLDTQLHT. Residues 58–79 form a helical membrane-spanning segment; it reads PMYFLLSQLSLMDLMLICTTVP. Topologically, residues 80 to 100 are extracellular; it reads KMAFNYLSGSKSISMAGCVTQ. An intrachain disulfide couples C97 to C189. Residues 101 to 120 traverse the membrane as a helical segment; it reads IFFYISLSGSECFLLAVMAY. Topologically, residues 121 to 139 are cytoplasmic; that stretch reads DRYIAICHPLRYTNLMNPK. The chain crosses the membrane as a helical span at residues 140-158; the sequence is ICGLMATFSWILGSTDGII. The Extracellular portion of the chain corresponds to 159 to 195; the sequence is DAVATFSFSFCGSREIAHFFCEFPSLLILSCNDTSIF. Residue N190 is glycosylated (N-linked (GlcNAc...) asparagine). The helical transmembrane segment at 196 to 219 threads the bilayer; that stretch reads EEVIFICCIVMLVFPVAIIIASYA. Topologically, residues 220–236 are cytoplasmic; the sequence is RVILAVIHMGSGEGRCK. Residues 237–259 traverse the membrane as a helical segment; it reads AFTTCSSHLMVVGMYYGAALFMY. The Extracellular segment spans residues 260 to 272; the sequence is IRPTSDHSPTQDK. The helical transmembrane segment at 273–292 threads the bilayer; the sequence is MVSVFYTILTPMLNPLIYSL. The Cytoplasmic segment spans residues 293–347; it reads RNKEVTRAFMKILGKGKSESELPHKLYVLLFAKFFFLISIFFYDVKILALIMYIA.

This sequence belongs to the G-protein coupled receptor 1 family.

The protein localises to the cell membrane. In terms of biological role, odorant receptor. This chain is Olfactory receptor 2M2 (OR2M2), found in Homo sapiens (Human).